The sequence spans 376 residues: Ribosomal RNA large subunit methyltransferase G (376 aa).

This sequence belongs to the methyltransferase superfamily. RlmG family.

The protein resides in the cytoplasm. It carries out the reaction guanosine(1835) in 23S rRNA + S-adenosyl-L-methionine = N(2)-methylguanosine(1835) in 23S rRNA + S-adenosyl-L-homocysteine + H(+). Specifically methylates the guanine in position 1835 (m2G1835) of 23S rRNA. This is Ribosomal RNA large subunit methyltransferase G from Klebsiella pneumoniae (strain 342).